A 156-amino-acid polypeptide reads, in one-letter code: MPRRRGIGHRKILSDPKFSSEMVAKLINIIMVDGKKSIAEEIVYQALTMLAKKIGKPELEVLELALENVRPTVEVKSRRVGGSTYQVPIEVRPVRRHALAMRWIVHSARKRIDKSMIIRLSNELSDAIENKGSAVKKREDVHRMAEANKAFAHYRW.

It belongs to the universal ribosomal protein uS7 family. Part of the 30S ribosomal subunit. Contacts proteins S9 and S11.

Its function is as follows. One of the primary rRNA binding proteins, it binds directly to 16S rRNA where it nucleates assembly of the head domain of the 30S subunit. Is located at the subunit interface close to the decoding center, probably blocks exit of the E-site tRNA. In Buchnera aphidicola subsp. Baizongia pistaciae (strain Bp), this protein is Small ribosomal subunit protein uS7.